The chain runs to 417 residues: 3-isopropylmalate dehydratase large subunit 2 (417 aa).

3 residues coordinate [4Fe-4S] cluster: Cys-298, Cys-358, and Cys-361.

Belongs to the aconitase/IPM isomerase family. LeuC type 2 subfamily. In terms of assembly, heterodimer of LeuC and LeuD. Requires [4Fe-4S] cluster as cofactor.

It carries out the reaction (2R,3S)-3-isopropylmalate = (2S)-2-isopropylmalate. It functions in the pathway amino-acid biosynthesis; L-leucine biosynthesis; L-leucine from 3-methyl-2-oxobutanoate: step 2/4. Its function is as follows. Catalyzes the isomerization between 2-isopropylmalate and 3-isopropylmalate, via the formation of 2-isopropylmaleate. The polypeptide is 3-isopropylmalate dehydratase large subunit 2 (Thermotoga maritima (strain ATCC 43589 / DSM 3109 / JCM 10099 / NBRC 100826 / MSB8)).